The primary structure comprises 1121 residues: Cuscuta receptor 1 (1121 aa).

The signal sequence occupies residues 1–20 (MGNIKFLLLVFFLIVVVVNG). Over 21–1058 (CWEEERNALL…EESSELEDIQ (1038 aa)) the chain is Extracellular. Asparagine 91 carries N-linked (GlcNAc...) asparagine glycosylation. LRR repeat units follow at residues 98–122 (FKSL…GFSK), 126–152 (LPNL…CWIS), 185–209 (LSNL…ALGE), 210–233 (LRNL…SLKI), 234–259 (FPSL…IIDL), 260–282 (SNLE…KGNK), 284–308 (MTSL…SLKS), and 309–331 (FSSL…IYAL). A glycan (N-linked (GlcNAc...) asparagine) is linked at asparagine 224. Residues asparagine 298, asparagine 321, and asparagine 333 are each glycosylated (N-linked (GlcNAc...) asparagine). An LRR 9 repeat occupies 334 to 360 (LSTVEYLYFKGSSLNDNFLPNIGQMTS). N-linked (GlcNAc...) asparagine glycans are attached at residues asparagine 372 and asparagine 406. LRR repeat units lie at residues 383 to 406 (LKYI…CLGN), 407 to 432 (LTSL…IWRR), 433 to 457 (LTSL…QFSD), 459 to 479 (KKLI…EYQN), 507 to 531 (QYDL…LLEN), 556 to 580 (HLHL…MSLA), 581 to 605 (FPKL…ISGI), 607 to 628 (LTIL…LAVV), 630 to 654 (SPQL…EFRP), 655 to 678 (HVLS…VFLS), 680 to 701 (LITL…TRDN), 702 to 725 (RRLL…ICNL), 726 to 749 (KIIN…VSSL), 751 to 772 (LKHI…IFNF), 773 to 796 (SSLI…IGSL), 797 to 820 (SNLN…ICML), 822 to 846 (NLSI…YLTQ), 914 to 938 (LKYM…LGNM), 939 to 961 (SNIH…TFSN), 962 to 986 (LQEI…LLEL), and 988 to 1012 (SLAV…QFGT). 3 N-linked (GlcNAc...) asparagine glycosylation sites follow: asparagine 531, asparagine 576, and asparagine 588. The N-linked (GlcNAc...) asparagine glycan is linked to asparagine 689. N-linked (GlcNAc...) asparagine glycosylation occurs at asparagine 771. Asparagine 822, asparagine 937, asparagine 945, asparagine 976, asparagine 998, asparagine 1014, and asparagine 1041 each carry an N-linked (GlcNAc...) asparagine glycan. A helical transmembrane segment spans residues 1059–1079 (CFYIGFVVSFGAILLGLAAAL). The Cytoplasmic segment spans residues 1080 to 1121 (CLNRHWRRAWFRMIEALMFYCYYFVLDNIVTPIKSRWYKNVG).

It belongs to the RLP family. As to quaternary structure, interacts with an 11 kDa glycine-rich protein (GRP) of C.reflexa. Interacts with SOBIR1 and SOBIR1-like kinases; presence or absence of GRP has no effect on interaction.

The protein localises to the cell membrane. Its subcellular location is the cell surface. Functionally, involved in plant defense. Contributes to resistance against parasitic plant C.reflexa. Acts as a receptor for the 11 kDa glycine-rich protein (GRP) of C.reflexa inducing immune responses such as emission of stress-related phytohormone ethylene, reactive oxygen species (ROS) release, and hypersensitive cell death. Recognizes a specific pathogen-associated molecular pattern (PAMP), a cysteine-rich peptide 21 (crip21), from GRP located on the cell wall of C.reflexa. The protein is Cuscuta receptor 1 of Solanum lycopersicum (Tomato).